A 128-amino-acid polypeptide reads, in one-letter code: Aspartate 1-decarboxylase (128 aa).

The Schiff-base intermediate with substrate; via pyruvic acid role is filled by Ser-25. Pyruvic acid (Ser) is present on Ser-25. Thr-57 lines the substrate pocket. Catalysis depends on Tyr-58, which acts as the Proton donor. 73 to 75 lines the substrate pocket; that stretch reads GAA.

The protein belongs to the PanD family. As to quaternary structure, heterooctamer of four alpha and four beta subunits. It depends on pyruvate as a cofactor. In terms of processing, is synthesized initially as an inactive proenzyme, which is activated by self-cleavage at a specific serine bond to produce a beta-subunit with a hydroxyl group at its C-terminus and an alpha-subunit with a pyruvoyl group at its N-terminus.

It is found in the cytoplasm. The enzyme catalyses L-aspartate + H(+) = beta-alanine + CO2. Its pathway is cofactor biosynthesis; (R)-pantothenate biosynthesis; beta-alanine from L-aspartate: step 1/1. Functionally, catalyzes the pyruvoyl-dependent decarboxylation of aspartate to produce beta-alanine. This is Aspartate 1-decarboxylase from Staphylococcus epidermidis (strain ATCC 35984 / DSM 28319 / BCRC 17069 / CCUG 31568 / BM 3577 / RP62A).